A 429-amino-acid polypeptide reads, in one-letter code: Aspartate--tRNA(Asp/Asn) ligase (429 aa).

Glu-167 is a binding site for L-aspartate. Residues 189-192 (QLYK) form an aspartate region. Residue Arg-210 participates in L-aspartate binding. Residues 210-212 (RAE) and Glu-352 contribute to the ATP site. Positions 352 and 355 each coordinate Mg(2+). Positions 355 and 359 each coordinate L-aspartate. 400-403 (GLAR) provides a ligand contact to ATP.

It belongs to the class-II aminoacyl-tRNA synthetase family. Type 2 subfamily. In terms of assembly, homodimer. Mg(2+) is required as a cofactor.

Its subcellular location is the cytoplasm. The enzyme catalyses tRNA(Asx) + L-aspartate + ATP = L-aspartyl-tRNA(Asx) + AMP + diphosphate. Functionally, aspartyl-tRNA synthetase with relaxed tRNA specificity since it is able to aspartylate not only its cognate tRNA(Asp) but also tRNA(Asn). Reaction proceeds in two steps: L-aspartate is first activated by ATP to form Asp-AMP and then transferred to the acceptor end of tRNA(Asp/Asn). This chain is Aspartate--tRNA(Asp/Asn) ligase, found in Sulfurisphaera tokodaii (strain DSM 16993 / JCM 10545 / NBRC 100140 / 7) (Sulfolobus tokodaii).